Consider the following 160-residue polypeptide: S-ribosylhomocysteine lyase (160 aa).

Histidine 57, histidine 61, and cysteine 127 together coordinate Fe cation.

The protein belongs to the LuxS family. Homodimer. Fe cation is required as a cofactor.

It catalyses the reaction S-(5-deoxy-D-ribos-5-yl)-L-homocysteine = (S)-4,5-dihydroxypentane-2,3-dione + L-homocysteine. Functionally, involved in the synthesis of autoinducer 2 (AI-2) which is secreted by bacteria and is used to communicate both the cell density and the metabolic potential of the environment. The regulation of gene expression in response to changes in cell density is called quorum sensing. Catalyzes the transformation of S-ribosylhomocysteine (RHC) to homocysteine (HC) and 4,5-dihydroxy-2,3-pentadione (DPD). The sequence is that of S-ribosylhomocysteine lyase from Streptococcus mutans serotype c (strain ATCC 700610 / UA159).